The following is a 938-amino-acid chain: Isoleucine--tRNA ligase (938 aa).

The 'HIGH' region motif lies at 58-68; it reads PYANGSIHIGH. E561 serves as a coordination point for L-isoleucyl-5'-AMP. The short motif at 602-606 is the 'KMSKS' region element; that stretch reads KMSKS. K605 is an ATP binding site. Zn(2+) contacts are provided by C901, C904, C921, and C924.

Belongs to the class-I aminoacyl-tRNA synthetase family. IleS type 1 subfamily. Monomer. Requires Zn(2+) as cofactor.

The protein resides in the cytoplasm. It catalyses the reaction tRNA(Ile) + L-isoleucine + ATP = L-isoleucyl-tRNA(Ile) + AMP + diphosphate. In terms of biological role, catalyzes the attachment of isoleucine to tRNA(Ile). As IleRS can inadvertently accommodate and process structurally similar amino acids such as valine, to avoid such errors it has two additional distinct tRNA(Ile)-dependent editing activities. One activity is designated as 'pretransfer' editing and involves the hydrolysis of activated Val-AMP. The other activity is designated 'posttransfer' editing and involves deacylation of mischarged Val-tRNA(Ile). This is Isoleucine--tRNA ligase from Cronobacter sakazakii (strain ATCC BAA-894) (Enterobacter sakazakii).